A 65-amino-acid polypeptide reads, in one-letter code: Large ribosomal subunit protein bL35 (65 aa).

Residues 1–46 (MPKMKTRQSAAKRYEVTGSGKLRRRRAGKNHLLQHKSAARKRSLST) are disordered. Residues 21–44 (KLRRRRAGKNHLLQHKSAARKRSL) are compositionally biased toward basic residues.

Belongs to the bacterial ribosomal protein bL35 family.

The sequence is that of Large ribosomal subunit protein bL35 from Gloeobacter violaceus (strain ATCC 29082 / PCC 7421).